Reading from the N-terminus, the 287-residue chain is Iron-sulfur cluster carrier protein (287 aa).

G47–S54 is an ATP binding site.

It belongs to the Mrp/NBP35 ATP-binding proteins family. As to quaternary structure, homodimer.

Its function is as follows. Binds and transfers iron-sulfur (Fe-S) clusters to target apoproteins. Can hydrolyze ATP. This chain is Iron-sulfur cluster carrier protein, found in Pseudomonas fragi.